Consider the following 83-residue polypeptide: UPF0248 protein PYRAB10580 (83 aa).

This sequence belongs to the UPF0248 family.

The chain is UPF0248 protein PYRAB10580 from Pyrococcus abyssi (strain GE5 / Orsay).